A 506-amino-acid polypeptide reads, in one-letter code: Catalase (506 aa).

Catalysis depends on residues histidine 73 and asparagine 146. A heme-binding site is contributed by tyrosine 356. The short motif at 504-506 is the Microbody targeting signal element; the sequence is SKF.

The protein belongs to the catalase family. In terms of assembly, homotetramer. Heme serves as cofactor.

It is found in the peroxisome matrix. It catalyses the reaction 2 H2O2 = O2 + 2 H2O. In terms of biological role, catalyzes the degradation of hydrogen peroxide (H(2)O(2)) generated by peroxisomal oxidases to water and oxygen, thereby protecting cells from the toxic effects of hydrogen peroxide. This Drosophila melanogaster (Fruit fly) protein is Catalase (Cat).